A 220-amino-acid polypeptide reads, in one-letter code: UPF0758 protein CKO_05095 (220 aa).

Positions A98–I220 constitute an MPN domain. Zn(2+) contacts are provided by H169, H171, and D182. Residues H169 to D182 carry the JAMM motif motif.

It belongs to the UPF0758 family. YicR subfamily.

The sequence is that of UPF0758 protein CKO_05095 from Citrobacter koseri (strain ATCC BAA-895 / CDC 4225-83 / SGSC4696).